Here is a 307-residue protein sequence, read N- to C-terminus: Recombination-associated protein RdgC (307 aa).

The protein belongs to the RdgC family.

Its subcellular location is the cytoplasm. It is found in the nucleoid. In terms of biological role, may be involved in recombination. The sequence is that of Recombination-associated protein RdgC from Burkholderia cenocepacia (strain ATCC BAA-245 / DSM 16553 / LMG 16656 / NCTC 13227 / J2315 / CF5610) (Burkholderia cepacia (strain J2315)).